The primary structure comprises 221 residues: Histone H1C (221 aa).

Disordered stretches follow at residues 1–43 (MSDP…PPVS) and 113–221 (AAKK…AKKA). Positions 38 to 112 (THPPVSEMVF…GALGSFKLPA (75 aa)) constitute an H15 domain. 2 stretches are compositionally biased toward basic residues: residues 141-167 (KVKKTIAKKPKAATATKIKKPVAKTTK) and 175-221 (AAKK…AKKA).

The protein belongs to the histone H1/H5 family.

It localises to the nucleus. The protein localises to the chromosome. In terms of biological role, histones H1 are necessary for the condensation of nucleosome chains into higher-order structures. This Chironomus tentans (Midge) protein is Histone H1C.